The primary structure comprises 238 residues: Ribonuclease 3 (238 aa).

Residues 17–140 (YATLEKALGY…LMAGVYLEAG (124 aa)) form the RNase III domain. Position 53 (glutamate 53) interacts with Mg(2+). The active site involves aspartate 57. Serine 126 and glutamate 129 together coordinate Mg(2+). Residue glutamate 129 is part of the active site. In terms of domain architecture, DRBM spans 167-236 (DYKTALQELT…AYQALQKLKE (70 aa)).

This sequence belongs to the ribonuclease III family. In terms of assembly, homodimer. Mg(2+) is required as a cofactor.

The protein localises to the cytoplasm. The enzyme catalyses Endonucleolytic cleavage to 5'-phosphomonoester.. In terms of biological role, digests double-stranded RNA. Involved in the processing of primary rRNA transcript to yield the immediate precursors to the large and small rRNAs (23S and 16S). Processes some mRNAs, and tRNAs when they are encoded in the rRNA operon. Processes pre-crRNA and tracrRNA of type II CRISPR loci if present in the organism. This chain is Ribonuclease 3, found in Helicobacter pylori (strain Shi470).